A 596-amino-acid polypeptide reads, in one-letter code: Elongation factor 4 (596 aa).

The 182-residue stretch at 2 to 183 (NNIRNFSIIA…TIIRKIPPPK (182 aa)) folds into the tr-type G domain. GTP is bound by residues 14-19 (DHGKST) and 130-133 (NKID).

This sequence belongs to the TRAFAC class translation factor GTPase superfamily. Classic translation factor GTPase family. LepA subfamily.

The protein localises to the cell inner membrane. The catalysed reaction is GTP + H2O = GDP + phosphate + H(+). Required for accurate and efficient protein synthesis under certain stress conditions. May act as a fidelity factor of the translation reaction, by catalyzing a one-codon backward translocation of tRNAs on improperly translocated ribosomes. Back-translocation proceeds from a post-translocation (POST) complex to a pre-translocation (PRE) complex, thus giving elongation factor G a second chance to translocate the tRNAs correctly. Binds to ribosomes in a GTP-dependent manner. The protein is Elongation factor 4 of Campylobacter fetus subsp. fetus (strain 82-40).